A 60-amino-acid chain; its full sequence is Large ribosomal subunit protein eL37 (60 aa).

Positions 18, 21, 33, and 36 each coordinate Zn(2+). A C4-type zinc finger spans residues 18–36 (CRRCGKNSYHVRKKVCAAC).

It belongs to the eukaryotic ribosomal protein eL37 family. Zn(2+) serves as cofactor.

In terms of biological role, binds to the 23S rRNA. This Methanothermobacter thermautotrophicus (strain ATCC 29096 / DSM 1053 / JCM 10044 / NBRC 100330 / Delta H) (Methanobacterium thermoautotrophicum) protein is Large ribosomal subunit protein eL37 (rpl37e).